A 91-amino-acid chain; its full sequence is Acylphosphatase (91 aa).

The Acylphosphatase-like domain occupies 3-90; sequence RVSMIVSGQV…CGYSIFTIRR (88 aa). Catalysis depends on residues Arg18 and Asn36.

It belongs to the acylphosphatase family.

It carries out the reaction an acyl phosphate + H2O = a carboxylate + phosphate + H(+). This chain is Acylphosphatase (acyP), found in Methanospirillum hungatei JF-1 (strain ATCC 27890 / DSM 864 / NBRC 100397 / JF-1).